The following is a 355-amino-acid chain: Inositol polyphosphate multikinase (355 aa).

N-acetylmethionine is present on Met-1. Lys-31 lines the ATP pocket. Residue Ser-97 is modified to Phosphoserine. Residues 118-120 (ENL) and Asp-131 each bind ATP. 127-135 (PNILDIKLG) is a substrate binding site. Positions 271 and 274 each coordinate Ca(2+). A compositionally biased stretch (acidic residues) spans 284–304 (FIDDDDDDDDNDDDDDDDAEG). The segment at 284 to 317 (FIDDDDDDDDNDDDDDDDAEGSSEGPKDKKTTGS) is disordered. Asp-325 serves as a coordination point for ATP. Gly-334 contacts Ca(2+).

Belongs to the inositol phosphokinase (IPK) family. As to quaternary structure, interacts with ARG80 and MCM1. Ca(2+) is required as a cofactor.

It localises to the nucleus. It catalyses the reaction 1D-myo-inositol 1,4,5-trisphosphate + 2 ATP = 1D-myo-inositol 1,3,4,5,6-pentakisphosphate + 2 ADP + 2 H(+). The enzyme catalyses 1D-myo-inositol 1,4,5-trisphosphate + ATP = 1D-myo-inositol 1,4,5,6-tetrakisphosphate + ADP + H(+). It carries out the reaction 1D-myo-inositol 1,4,5-trisphosphate + ATP = 1D-myo-inositol 1,3,4,5-tetrakisphosphate + ADP + H(+). The catalysed reaction is 1D-myo-inositol 1,4,5,6-tetrakisphosphate + ATP = 1D-myo-inositol 1,3,4,5,6-pentakisphosphate + ADP + H(+). It catalyses the reaction a 1,2-diacyl-sn-glycero-3-phospho-(1D-myo-inositol-4,5-bisphosphate) + ATP = a 1,2-diacyl-sn-glycero-3-phospho-(1D-myo-inositol-3,4,5-trisphosphate) + ADP + H(+). Its function is as follows. Inositol phosphate kinase with both monophosphoinositol and diphosphoinositol polyphosphate synthase activities. Able to phosphorylate inositol 1,4,5-trisphosphate (Ins(1,4,5)P3) on both the carbon-3 and carbon-6 positions to synthesize inositol 1,3,4,5-tetrakisphosphate (Ins(1,3,4,5)P4) and inositol 1,4,5,6-tetrakisphosphate (Ins(1,4,5,6)P4), and then to subsequently phosphorylate and convert either isomer of InsP4 to inositol 1,3,4,5,6-pentakisphosphate (Ins(1,3,4,5,6)P5). Its predominant in vivo catalytic function is to convert Ins(1,4,5)P3 to Ins(1,4,5,6)P4 to Ins(1,3,4,5,6)P5 via 6- and 3-kinase activities. It can also use Ins(1,3,4,5,6)P5 as a substrate and act as a diphosphoinositol polyphosphate synthase to generate two different isomers of PP-InsP4. Also has a role in transcription regulation. Forms a complex with ARG80, ARG81 and MCM1 (ArgR-MCM1), which coordinates the expression of arginine anabolic and catabolic genes in response to arginine. Recruits ARG80 and MCM21 to stabilize them. Neither the kinase activity nor inositol phosphates are required for the formation of ArgR-MCM1 transcriptional complexes on DNA promoter elements and the control of arginine metabolism. In contrast, only the catalytic activity is required for PHO gene repression by phosphate and for NCR gene activation in response to nitrogen availability, indicating a role for inositol pyrophosphates in these controls. Inositol polyphosphates may be involved in the regulation of chromatin remodeling of transcription. Regulates nuclear mRNA export via inositol phosphate metabolism. Also has lipid kinase activity, transforming the lipid inositol phosphatidylinositol 4,5-bisphosphate (PI(4,5)P2) into phosphatidylinositol 3,4,5-trisphosphate (PI(3,4,5)P3) in the nucleus. Its kinase activity is necessary for the propagation of most [PSI+] prion variants. The protein is Inositol polyphosphate multikinase (ARG82) of Saccharomyces cerevisiae (strain ATCC 204508 / S288c) (Baker's yeast).